An 80-amino-acid polypeptide reads, in one-letter code: Defensin coprisin (80 aa).

Positions 1 to 20 (MAKLIAFALVASLCLSMVLC) are cleaved as a signal peptide. Positions 21-37 (NPLPEEVQEEGLVRQKR) are excised as a propeptide. Intrachain disulfides connect cysteine 40/cysteine 71, cysteine 57/cysteine 76, and cysteine 61/cysteine 78.

The protein belongs to the invertebrate defensin family. Type 1 subfamily.

The protein localises to the secreted. Its subcellular location is the target cell membrane. Potent broad-spectrum antibacterial peptide against both Gram-positive (B.subtilis, S.epidermidis, and S.aureus) and Gram-negative bacteria (E.coli, S.typhimurium, and P.aeruginosa). Is also active against all antibiotic-resistant bacterial strains tested. Induces apoptosis in C.albicans, but does not disrupt the fungal plasma membrane at all. Acts by permeabilizing the bacterial cell membrane, but not human membranes. Also shows potent anti-inflammatory activities, since it reduces both LPS-induced nitric oxide release and pro-inflammatory cytokine production. Anti-inflammatory activities are initiated by suppressing the binding of LPS to toll-like receptor 4 (TLR4), and subsequently inhibiting the phosphorylation of p38 mitogen-activated protein kinase (MAPK) and nuclear translocation of NF-kB (TNFRSF11A). Does not show hemolytic activity against human erythrocytes. This Copris tripartitus (Dung beetle) protein is Defensin coprisin.